We begin with the raw amino-acid sequence, 690 residues long: MANDPRNFPQRKLLVTCALPYANGSIHLGHMLEHIQADIWVRYQRLRGNIVNFICADDAHGTPIMLKAQQMGMSPEEMIAAVSIEHQKDFAGFDISFDNYHSTHSDENRELASHIYLQLKKNGFISSRTISQLFDPEKEMFLPDRFVKGTCPKCKSEDQYGDNCDACGETYSPTELINPKSAVSGATPVMKDSEHFFFDLPQFESMLKEWTRSGSLQTETANKMQEWFESGLQQWDISRDAPYFGFEIPGEKDKFFYVWLDAPIGYMGSFKNLCDKRDDLDFDEYWNKDSKTELYHFIGKDIVYFHSLFWPAMLDGSGFRKPNNVFVHGYVTVNGAKMSKSKGTFVKASTYLEHLDPECLRYYYAAKLNSRIDDLDLNLEDFTQRVNADVVNKIVNLASRNAGFIAKRFEGKLAENFVEPELYNEFVAAADRIAELYEAREFGRAIRELTALADKANQYVDEKAPWVVAKQEGKDQELQEICSVGINLFRVLMTYLKPVMPALAARTEAFLNEELTWEGVAQPLTAHEITAFKALFNRIDPKNIEAMIEASKEDAAAEMAAKEKAEASNAAQETELSKDPIAEEIEFDDFAKVDLRIAKIVSCESVPKADKLLKFQLDIGGEMRQVFSGIKAAYNPEDLVGKYTVVVANLKPRKMKFGMSEGMILAAGPGGKDLWILEPHEGAQPGMRVM.

A 'HIGH' region motif is present at residues 20–30; sequence PYANGSIHLGH. The Zn(2+) site is built by Cys151, Cys154, Cys164, and Cys167. The 'KMSKS' region signature appears at 337–341; the sequence is KMSKS. Lys340 provides a ligand contact to ATP. A tRNA-binding domain is found at 589 to 690; it reads DFAKVDLRIA…EGAQPGMRVM (102 aa).

It belongs to the class-I aminoacyl-tRNA synthetase family. MetG type 1 subfamily. Homodimer. Zn(2+) is required as a cofactor.

It is found in the cytoplasm. The enzyme catalyses tRNA(Met) + L-methionine + ATP = L-methionyl-tRNA(Met) + AMP + diphosphate. In terms of biological role, is required not only for elongation of protein synthesis but also for the initiation of all mRNA translation through initiator tRNA(fMet) aminoacylation. This chain is Methionine--tRNA ligase, found in Vibrio vulnificus (strain CMCP6).